A 204-amino-acid chain; its full sequence is U1 small nuclear ribonucleoprotein C (204 aa).

The Matrin-type zinc finger occupies 4–36; the sequence is FFCDYCDVYLTHDSMSVRKAHNSGRNHLRNVVD. The interval 65 to 204 is disordered; sequence ANPMLPQNQP…GAGAPGHEKR (140 aa). Composition is skewed to pro residues over residues 77–154 and 166–192; these read GFPP…PGAP and APPP…PGFA.

Belongs to the U1 small nuclear ribonucleoprotein C family. U1 snRNP is composed of the 7 core Sm proteins B/B', D1, D2, D3, E, F and G that assemble in a heptameric protein ring on the Sm site of the small nuclear RNA to form the core snRNP, and at least 3 U1 snRNP-specific proteins U1-70K, U1-A and U1-C. U1-C interacts with U1 snRNA and the 5' splice-site region of the pre-mRNA.

It localises to the nucleus. Functionally, component of the spliceosomal U1 snRNP, which is essential for recognition of the pre-mRNA 5' splice-site and the subsequent assembly of the spliceosome. U1-C is directly involved in initial 5' splice-site recognition for both constitutive and regulated alternative splicing. The interaction with the 5' splice-site seems to precede base-pairing between the pre-mRNA and the U1 snRNA. Stimulates commitment or early (E) complex formation by stabilizing the base pairing of the 5' end of the U1 snRNA and the 5' splice-site region. This is U1 small nuclear ribonucleoprotein C from Fusarium vanettenii (strain ATCC MYA-4622 / CBS 123669 / FGSC 9596 / NRRL 45880 / 77-13-4) (Fusarium solani subsp. pisi).